We begin with the raw amino-acid sequence, 264 residues long: Glutamate racemase (264 aa).

Substrate-binding positions include 10-11 (DS) and 42-43 (YG). Cys73 acts as the Proton donor/acceptor in catalysis. Position 74-75 (74-75 (NT)) interacts with substrate. The Proton donor/acceptor role is filled by Cys183. 184 to 185 (TH) contacts substrate.

It belongs to the aspartate/glutamate racemases family.

The catalysed reaction is L-glutamate = D-glutamate. The protein operates within cell wall biogenesis; peptidoglycan biosynthesis. In terms of biological role, provides the (R)-glutamate required for cell wall biosynthesis. This Streptococcus agalactiae serotype III (strain NEM316) protein is Glutamate racemase.